Reading from the N-terminus, the 261-residue chain is Imidazole glycerol phosphate synthase subunit HisF (261 aa).

Residues Asp16 and Asp135 contribute to the active site.

The protein belongs to the HisA/HisF family. As to quaternary structure, heterodimer of HisH and HisF.

The protein resides in the cytoplasm. It carries out the reaction 5-[(5-phospho-1-deoxy-D-ribulos-1-ylimino)methylamino]-1-(5-phospho-beta-D-ribosyl)imidazole-4-carboxamide + L-glutamine = D-erythro-1-(imidazol-4-yl)glycerol 3-phosphate + 5-amino-1-(5-phospho-beta-D-ribosyl)imidazole-4-carboxamide + L-glutamate + H(+). The protein operates within amino-acid biosynthesis; L-histidine biosynthesis; L-histidine from 5-phospho-alpha-D-ribose 1-diphosphate: step 5/9. Its function is as follows. IGPS catalyzes the conversion of PRFAR and glutamine to IGP, AICAR and glutamate. The HisF subunit catalyzes the cyclization activity that produces IGP and AICAR from PRFAR using the ammonia provided by the HisH subunit. This is Imidazole glycerol phosphate synthase subunit HisF from Mycolicibacterium vanbaalenii (strain DSM 7251 / JCM 13017 / BCRC 16820 / KCTC 9966 / NRRL B-24157 / PYR-1) (Mycobacterium vanbaalenii).